A 335-amino-acid chain; its full sequence is Phospho-N-acetylmuramoyl-pentapeptide-transferase (335 aa).

10 helical membrane-spanning segments follow: residues 3–23 (LTIL…PHFI), 53–73 (GGTV…LVYF), 78–98 (SLGL…IGFL), 118–138 (FTFQ…PSGI), 143–163 (VFGY…FWVV), 174–194 (GIDG…GVIA), 200–220 (FDVL…FLFN), 226–246 (IFMG…ISIA), 251–271 (WTLL…MLQV), and 314–334 (VDAF…AILY).

This sequence belongs to the glycosyltransferase 4 family. MraY subfamily. Requires Mg(2+) as cofactor.

The protein localises to the cell membrane. It carries out the reaction UDP-N-acetyl-alpha-D-muramoyl-L-alanyl-gamma-D-glutamyl-L-lysyl-D-alanyl-D-alanine + di-trans,octa-cis-undecaprenyl phosphate = Mur2Ac(oyl-L-Ala-gamma-D-Glu-L-Lys-D-Ala-D-Ala)-di-trans,octa-cis-undecaprenyl diphosphate + UMP. It participates in cell wall biogenesis; peptidoglycan biosynthesis. In terms of biological role, catalyzes the initial step of the lipid cycle reactions in the biosynthesis of the cell wall peptidoglycan: transfers peptidoglycan precursor phospho-MurNAc-pentapeptide from UDP-MurNAc-pentapeptide onto the lipid carrier undecaprenyl phosphate, yielding undecaprenyl-pyrophosphoryl-MurNAc-pentapeptide, known as lipid I. The polypeptide is Phospho-N-acetylmuramoyl-pentapeptide-transferase (Streptococcus equi subsp. equi (strain 4047)).